The primary structure comprises 492 residues: MDFWLYKQAQQNGHHIAITDGQESYTYQNLYCEASLLAKRLKAYQQSRVGLYIDNSIQSIILIHACWLANIEIAMINTRLTPNEMKNQMRSIDVQLIFCTLPLELRGFQIVSLDDIEFAGTDITMNGLLDNTMDIQYDTSNETVVPKESPSNILNTSFNLDDIASIMFTSGTTGPQKAVPQTFRNHYASAIGCKESLGFDRDTNWLSVLPIYHISGLSVLLRAVIEGFTVRIVDKFNAEQILTIIKNERITHISLVPQTLNWLMQQGLHEPYNLQKILLGGAKLSATLIETALQYNLPIYNSFGMTETCSQFLTATPEMLHARPDTVGMPSANVDVKIKNPNKEGHGELMIKGANVMNGYLYPTDLTGTFENGYFNTGDIAEIDHEGYVMIYDRRKDLIISGGENIYPYQIETVAKQFPGISDAVCVGHPDDTWGQVPKLYFVSESDISKAQLIAYLSQHLAKYKVPKHFEKVDTLPYTSTGKLQRNKLYRG.

Belongs to the ATP-dependent AMP-binding enzyme family. MenE subfamily.

It catalyses the reaction 2-succinylbenzoate + ATP + CoA = 2-succinylbenzoyl-CoA + AMP + diphosphate. It participates in quinol/quinone metabolism; 1,4-dihydroxy-2-naphthoate biosynthesis; 1,4-dihydroxy-2-naphthoate from chorismate: step 5/7. It functions in the pathway quinol/quinone metabolism; menaquinone biosynthesis. Converts 2-succinylbenzoate (OSB) to 2-succinylbenzoyl-CoA (OSB-CoA). In Staphylococcus aureus (strain MSSA476), this protein is 2-succinylbenzoate--CoA ligase.